The following is a 357-amino-acid chain: Guanine nucleotide-binding protein alpha-2 subunit (357 aa).

Gly-2 carries N-myristoyl glycine lipidation. Cys-4 carries S-palmitoyl cysteine lipidation. A G-alpha domain is found at 30–356 (NEVKLLLLGA…TQCVMKAGLY (327 aa)). The G1 motif stretch occupies residues 33–46 (KLLLLGAGESGKST). GTP contacts are provided by Glu-41, Ser-42, Gly-43, Lys-44, Ser-45, and Thr-46. Ser-45 is a Mg(2+) binding site. Ser-113 carries the phosphoserine modification. GTP contacts are provided by Asp-154, Leu-179, Thr-185, Gly-207, Asn-272, Lys-273, Asp-275, and Ala-328. A G2 motif region spans residues 177-185 (DILHTRVMT). Thr-185 is a binding site for Mg(2+). The tract at residues 200 to 209 (FRLVDVGGQR) is G3 motif. The tract at residues 268–275 (ILFLNKSD) is G4 motif. The G5 motif stretch occupies residues 326-331 (TCATDT).

Belongs to the G-alpha family. In terms of assembly, g proteins are composed of 3 units; alpha, beta and gamma. The alpha chain contains the guanine nucleotide binding site. Interacts with the RAP guanine nucleotide exchange factor glfB. Mg(2+) serves as cofactor. In terms of processing, ser-113 is transiently phosphorylated following stimulation with extracellular cAMP.

In terms of biological role, guanine nucleotide-binding proteins (G proteins) are involved as modulators or transducers in various transmembrane signaling systems. G alpha-2 is required for the early aggregation process and most of the known cAMP receptor-mediated responses. Interacts with downstream effector gflB, a Rap guanine nucleotide exchange factor, to regulate the balance between Ras and Rap signaling at the leading edge of chemotaxing cells. The chain is Guanine nucleotide-binding protein alpha-2 subunit (gpaB) from Dictyostelium discoideum (Social amoeba).